Reading from the N-terminus, the 380-residue chain is UDP-N-acetylglucosamine--N-acetylmuramyl-(pentapeptide) pyrophosphoryl-undecaprenol N-acetylglucosamine transferase (380 aa).

UDP-N-acetyl-alpha-D-glucosamine is bound by residues 23-25 (TGG), Asn-137, Arg-178, Ser-210, Ile-266, and Gln-311.

The protein belongs to the glycosyltransferase 28 family. MurG subfamily.

The protein resides in the cell inner membrane. The catalysed reaction is di-trans,octa-cis-undecaprenyl diphospho-N-acetyl-alpha-D-muramoyl-L-alanyl-D-glutamyl-meso-2,6-diaminopimeloyl-D-alanyl-D-alanine + UDP-N-acetyl-alpha-D-glucosamine = di-trans,octa-cis-undecaprenyl diphospho-[N-acetyl-alpha-D-glucosaminyl-(1-&gt;4)]-N-acetyl-alpha-D-muramoyl-L-alanyl-D-glutamyl-meso-2,6-diaminopimeloyl-D-alanyl-D-alanine + UDP + H(+). It functions in the pathway cell wall biogenesis; peptidoglycan biosynthesis. Its function is as follows. Cell wall formation. Catalyzes the transfer of a GlcNAc subunit on undecaprenyl-pyrophosphoryl-MurNAc-pentapeptide (lipid intermediate I) to form undecaprenyl-pyrophosphoryl-MurNAc-(pentapeptide)GlcNAc (lipid intermediate II). The polypeptide is UDP-N-acetylglucosamine--N-acetylmuramyl-(pentapeptide) pyrophosphoryl-undecaprenol N-acetylglucosamine transferase (Bacteroides fragilis (strain ATCC 25285 / DSM 2151 / CCUG 4856 / JCM 11019 / LMG 10263 / NCTC 9343 / Onslow / VPI 2553 / EN-2)).